Reading from the N-terminus, the 1242-residue chain is Myosin-16 (1242 aa).

The Myosin N-terminal SH3-like domain occupies 6–55 (MVDSHVWVEDPERAWIDGVVLNIKGEEAEIKTNDGRDVIANLSRLYPKDT). The 670-residue stretch at 60–729 (EGVEDMTRLS…QMAELDAHRT (670 aa)) folds into the Myosin motor domain. ATP is bound by residues 154–161 (GESGSGKT) and 207–215 (NNNSSRFGK). 4 actin-binding regions span residues 493 to 527 (LIEK…YHTF), 529 to 552 (DHKR…AGDV), 587 to 610 (FPPL…KLQL), and 610 to 632 (LQQL…KPNN). IQ domains lie at 732 to 761 (LGES…ASVN), 755 to 784 (MRRA…EEAA), 780 to 809 (REEA…SALT), 803 to 832 (TKSS…TRAA), 828 to 857 (TTRA…VSLL), and 851 to 880 (LKRV…ADRK). Disordered stretches follow at residues 869–893 (KQLG…ELSN) and 908–1042 (EQSD…ERKT). Basic and acidic residues predominate over residues 876-893 (QADRKEETEKERKVELSN). 6 repeat units span residues 876–908 (QADR…LHSE), 909–940 (QSDD…LHSE), 941–965 (QSDD…GHSD), 966–997 (QSDD…MHSD), 998–1029 (QSDD…VHSD), and 1030–1061 (QSDD…TCSE). The interval 876–1061 (QADRKEETEK…IQKSFVTCSE (186 aa)) is 6 X 33 AA repeats of Q-S-D-D-x-E-E-x(2)-H-x-R-K-x-K-x(2)-I-x(2)-E-D-G-x(3)-S-x-V-x-H-S-x. The segment covering 948 to 966 (GHERKTKLSIESEDGHSDQ) has biased composition (basic and acidic residues). Residues 1079-1142 (DTEIESLTAE…QLQDSLNRLL (64 aa)) adopt a coiled-coil conformation. The segment at 1175-1242 (DLADSSENSE…DKEGGFEDYF (68 aa)) is disordered. Low complexity predominate over residues 1179 to 1191 (SSENSEASSSDSD). Over residues 1199–1224 (PSSDNFSTFNPNQLQVIVQDLSTTEA) the composition is skewed to polar residues. The span at 1225 to 1242 (KGTESYDSDKEGGFEDYF) shows a compositional bias: basic and acidic residues.

This sequence belongs to the TRAFAC class myosin-kinesin ATPase superfamily. Myosin family. Plant myosin class XI subfamily. Homodimer. Expressed in flowers and leaves.

Its subcellular location is the cytoplasm. Its function is as follows. Myosin heavy chain that is required for the cell cycle-regulated transport of various organelles and proteins for their segregation. Functions by binding with its tail domain to receptor proteins on organelles and exerting force with its N-terminal motor domain against actin filaments, thereby transporting its cargo along polarized actin cables. This chain is Myosin-16 (XI-J), found in Arabidopsis thaliana (Mouse-ear cress).